A 199-amino-acid chain; its full sequence is Casparian strip membrane protein 1 (199 aa).

Over 1–37 (MKSESAAIDIPESSSVAKGKAPLIAVSRNEKGGYRKG) the chain is Cytoplasmic. A helical transmembrane segment spans residues 38–58 (IAIFDFILRLAAIATALAAAA). Residues 59 to 87 (AMGTSDETLPFFTQFFQFQASYDDLPTFQ) are Extracellular-facing. A helical membrane pass occupies residues 88–108 (FFVIAIAIVGGYLVLSLPFSI). The Cytoplasmic segment spans residues 109-120 (VAIVRPHAVGPR). A helical transmembrane segment spans residues 121–141 (LLLIILDAVALTLNTAAGAAA). The Extracellular segment spans residues 142–173 (AAIVYLAHNGNSNTNWLAICQQYGDFCQKVSG). A helical membrane pass occupies residues 174–194 (AVVASFITVVIFVFLIVLSAF). The Cytoplasmic segment spans residues 195 to 199 (ALRRH).

This sequence belongs to the Casparian strip membrane proteins (CASP) family. As to quaternary structure, homodimer and heterodimers.

It is found in the cell membrane. Functionally, regulates membrane-cell wall junctions and localized cell wall deposition. Required for establishment of the Casparian strip membrane domain (CSD) and the subsequent formation of Casparian strips, a cell wall modification of the root endodermis that determines an apoplastic barrier between the intraorganismal apoplasm and the extraorganismal apoplasm and prevents lateral diffusion. This Populus trichocarpa (Western balsam poplar) protein is Casparian strip membrane protein 1.